The following is a 424-amino-acid chain: D-inositol 3-phosphate glycosyltransferase (424 aa).

Histidine 9 serves as a coordination point for 1D-myo-inositol 3-phosphate. UDP-N-acetyl-alpha-D-glucosamine is bound by residues 15 to 16 and glycine 23; that span reads QP. 1D-myo-inositol 3-phosphate contacts are provided by residues 20-25, lysine 78, tyrosine 110, threonine 134, and arginine 154; that span reads DSGGMN. Arginine 231, lysine 236, and arginine 294 together coordinate UDP-N-acetyl-alpha-D-glucosamine. Mg(2+)-binding residues include tyrosine 303, arginine 304, and alanine 306. Positions 316 and 324 each coordinate UDP-N-acetyl-alpha-D-glucosamine. Threonine 330 lines the Mg(2+) pocket.

It belongs to the glycosyltransferase group 1 family. MshA subfamily. Homodimer.

The catalysed reaction is 1D-myo-inositol 3-phosphate + UDP-N-acetyl-alpha-D-glucosamine = 1D-myo-inositol 2-acetamido-2-deoxy-alpha-D-glucopyranoside 3-phosphate + UDP + H(+). In terms of biological role, catalyzes the transfer of a N-acetyl-glucosamine moiety to 1D-myo-inositol 3-phosphate to produce 1D-myo-inositol 2-acetamido-2-deoxy-glucopyranoside 3-phosphate in the mycothiol biosynthesis pathway. The sequence is that of D-inositol 3-phosphate glycosyltransferase from Corynebacterium efficiens (strain DSM 44549 / YS-314 / AJ 12310 / JCM 11189 / NBRC 100395).